We begin with the raw amino-acid sequence, 272 residues long: Imidazole glycerol phosphate synthase subunit HisF (272 aa).

Residues Asp11 and Asp130 contribute to the active site.

Belongs to the HisA/HisF family. As to quaternary structure, heterodimer of HisH and HisF.

The protein resides in the cytoplasm. It carries out the reaction 5-[(5-phospho-1-deoxy-D-ribulos-1-ylimino)methylamino]-1-(5-phospho-beta-D-ribosyl)imidazole-4-carboxamide + L-glutamine = D-erythro-1-(imidazol-4-yl)glycerol 3-phosphate + 5-amino-1-(5-phospho-beta-D-ribosyl)imidazole-4-carboxamide + L-glutamate + H(+). The protein operates within amino-acid biosynthesis; L-histidine biosynthesis; L-histidine from 5-phospho-alpha-D-ribose 1-diphosphate: step 5/9. IGPS catalyzes the conversion of PRFAR and glutamine to IGP, AICAR and glutamate. The HisF subunit catalyzes the cyclization activity that produces IGP and AICAR from PRFAR using the ammonia provided by the HisH subunit. This is Imidazole glycerol phosphate synthase subunit HisF from Methanococcus maripaludis (strain C6 / ATCC BAA-1332).